A 339-amino-acid polypeptide reads, in one-letter code: Glycerol-3-phosphate dehydrogenase [NAD(P)+] (339 aa).

The NADPH site is built by serine 15, tyrosine 16, histidine 36, and lysine 110. Sn-glycerol 3-phosphate contacts are provided by lysine 110, glycine 139, and threonine 141. Residue alanine 143 participates in NADPH binding. The sn-glycerol 3-phosphate site is built by lysine 195, aspartate 248, serine 258, arginine 259, and asparagine 260. The Proton acceptor role is filled by lysine 195. An NADPH-binding site is contributed by arginine 259. NADPH is bound by residues valine 283 and glutamate 285.

This sequence belongs to the NAD-dependent glycerol-3-phosphate dehydrogenase family.

Its subcellular location is the cytoplasm. It carries out the reaction sn-glycerol 3-phosphate + NAD(+) = dihydroxyacetone phosphate + NADH + H(+). The enzyme catalyses sn-glycerol 3-phosphate + NADP(+) = dihydroxyacetone phosphate + NADPH + H(+). It participates in membrane lipid metabolism; glycerophospholipid metabolism. Catalyzes the reduction of the glycolytic intermediate dihydroxyacetone phosphate (DHAP) to sn-glycerol 3-phosphate (G3P), the key precursor for phospholipid synthesis. The polypeptide is Glycerol-3-phosphate dehydrogenase [NAD(P)+] (Klebsiella pneumoniae (strain 342)).